Here is a 163-residue protein sequence, read N- to C-terminus: ATP synthase subunit b (163 aa).

A helical transmembrane segment spans residues 10-29; the sequence is VFMQMFHFLLMLVVLRLFAY.

The protein belongs to the ATPase B chain family. F-type ATPases have 2 components, F(1) - the catalytic core - and F(0) - the membrane proton channel. F(1) has five subunits: alpha(3), beta(3), gamma(1), delta(1), epsilon(1). F(0) has three main subunits: a(1), b(2) and c(10-14). The alpha and beta chains form an alternating ring which encloses part of the gamma chain. F(1) is attached to F(0) by a central stalk formed by the gamma and epsilon chains, while a peripheral stalk is formed by the delta and b chains.

It is found in the cell membrane. In terms of biological role, f(1)F(0) ATP synthase produces ATP from ADP in the presence of a proton or sodium gradient. F-type ATPases consist of two structural domains, F(1) containing the extramembraneous catalytic core and F(0) containing the membrane proton channel, linked together by a central stalk and a peripheral stalk. During catalysis, ATP synthesis in the catalytic domain of F(1) is coupled via a rotary mechanism of the central stalk subunits to proton translocation. Functionally, component of the F(0) channel, it forms part of the peripheral stalk, linking F(1) to F(0). The protein is ATP synthase subunit b of Desulforudis audaxviator (strain MP104C).